The chain runs to 60 residues: Probable UDP-arabinopyranose mutase 1 (60 aa).

It belongs to the RGP family. In terms of assembly, homopentamer or homohexamer. Mn(2+) serves as cofactor. Requires Mg(2+) as cofactor.

Its subcellular location is the secreted. It is found in the cell wall. It localises to the cell junction. The protein localises to the plasmodesma. The protein resides in the golgi apparatus. It carries out the reaction UDP-beta-L-arabinofuranose = UDP-beta-L-arabinopyranose. Its function is as follows. Probable UDP-L-arabinose mutase involved in the biosynthesis of cell wall non-cellulosic polysaccharides. The polypeptide is Probable UDP-arabinopyranose mutase 1 (Phoenix dactylifera (Date palm)).